The sequence spans 902 residues: Translation initiation factor IF-2 (902 aa).

Residues 137-177 (NLDEQQRLAESDRARDEAIQRKRDEEQAAKDRVEAERKAAE) show a composition bias toward basic and acidic residues. Disordered stretches follow at residues 137 to 248 (NLDE…SHVM) and 266 to 314 (HLSA…ERPT). Composition is skewed to low complexity over residues 178–229 (EAAA…ATPA) and 279–291 (RGKP…SSSS). Positions 401–570 (SRPPVVTIMG…SLQAEVLELK (170 aa)) constitute a tr-type G domain. A G1 region spans residues 410–417 (GHVDHGKT). GTP is bound at residue 410–417 (GHVDHGKT). The interval 435 to 439 (GITQH) is G2. Positions 456–459 (DTPG) are G3. Residues 456 to 460 (DTPGH) and 510 to 513 (NKID) contribute to the GTP site. Residues 510–513 (NKID) form a G4 region. Residues 546 to 548 (SAK) are G5.

The protein belongs to the TRAFAC class translation factor GTPase superfamily. Classic translation factor GTPase family. IF-2 subfamily.

It is found in the cytoplasm. One of the essential components for the initiation of protein synthesis. Protects formylmethionyl-tRNA from spontaneous hydrolysis and promotes its binding to the 30S ribosomal subunits. Also involved in the hydrolysis of GTP during the formation of the 70S ribosomal complex. This chain is Translation initiation factor IF-2, found in Xanthomonas campestris pv. campestris (strain 8004).